We begin with the raw amino-acid sequence, 784 residues long: Receptor-like protein 38 (784 aa).

The first 30 residues, 1 to 30, serve as a signal peptide directing secretion; it reads MIRSQSYCFLGITITIYFFFCLLPLPNTFA. The Extracellular portion of the chain corresponds to 31-752; that stretch reads SPPTQSLCRH…SELEEPVLNW (722 aa). 5 LRR repeats span residues 109–133, 134–157, 158–180, 182–204, and 205–227; these read LQHL…IENL, SHLT…IGNL, NQLE…SFAN, TKLS…LSNL, and TSLA…DLSG. The N-linked (GlcNAc...) asparagine glycan is linked to Asn132. N-linked (GlcNAc...) asparagine glycosylation is found at Asn180, Asn193, and Asn203. One copy of the LRR 6; degenerate repeat lies at 228 to 251; sequence LHNLEQIFGNENSFVGLFPASLLK. LRR repeat units follow at residues 252–276, 278–301, 302–324, 326–349, 351–373, 374–400, 402–422, 423–446, 447–470, and 472–496; these read ISSL…NTSS, SRLT…LSKL, VNLE…SISK, VNLT…IWKP, NLQS…EVVN, GAKL…NFRF, FFLD…LKNS, TDFN…CMDS, TMLR…LMNC, and DMEF…SRKS. N-linked (GlcNAc...) asparagine glycosylation occurs at Asn273. N-linked (GlcNAc...) asparagine glycosylation is present at Asn327. Asn421 and Asn432 each carry an N-linked (GlcNAc...) asparagine glycan. The stretch at 497–518 is one LRR 17; degenerate repeat; sequence LMVLVLRSNAFYGPVYNSTTYL. Asn513, Asn544, and Asn562 each carry an N-linked (GlcNAc...) asparagine glycan. An LRR 18 repeat occupies 520-544; the sequence is FPRLSIIDISNNDFVGSLPQDYFAN. LRR repeat units follow at residues 608 to 632, 633 to 656, 657 to 680, and 682 to 705; these read FRGF…IGLL, SELL…LANI, TNLE…LGNL, and FLSN…QFGT. Residues Asn639, Asn655, Asn668, Asn679, Asn687, and Asn707 are each glycosylated (N-linked (GlcNAc...) asparagine). Residues 753 to 773 traverse the membrane as a helical segment; the sequence is IAAAIAFGPGVFCGFVIGHIF. Residues 774 to 784 lie on the Cytoplasmic side of the membrane; it reads TSYKHLWFIAR.

It belongs to the RLP family.

The protein localises to the cell membrane. This is Receptor-like protein 38 from Arabidopsis thaliana (Mouse-ear cress).